The primary structure comprises 345 residues: Phosphoribosylformylglycinamidine cyclo-ligase (345 aa).

Belongs to the AIR synthase family.

The protein resides in the cytoplasm. It carries out the reaction 2-formamido-N(1)-(5-O-phospho-beta-D-ribosyl)acetamidine + ATP = 5-amino-1-(5-phospho-beta-D-ribosyl)imidazole + ADP + phosphate + H(+). The protein operates within purine metabolism; IMP biosynthesis via de novo pathway; 5-amino-1-(5-phospho-D-ribosyl)imidazole from N(2)-formyl-N(1)-(5-phospho-D-ribosyl)glycinamide: step 2/2. The protein is Phosphoribosylformylglycinamidine cyclo-ligase of Pseudoalteromonas atlantica (strain T6c / ATCC BAA-1087).